The following is a 351-amino-acid chain: GTPase Obg (351 aa).

In terms of domain architecture, Obg spans 1–159 (MKFLDQAKVY…RWIWLRLKLI (159 aa)). In terms of domain architecture, OBG-type G spans 160 to 328 (ADVGLVGLPN…LCGSAWDIVL (169 aa)). Residues 166-173 (GLPNAGKS), 191-195 (FTTLY), 213-216 (DIPG), 280-283 (NKID), and 309-311 (SGV) contribute to the GTP site. The Mg(2+) site is built by Ser173 and Thr193.

It belongs to the TRAFAC class OBG-HflX-like GTPase superfamily. OBG GTPase family. As to quaternary structure, monomer. Mg(2+) serves as cofactor.

The protein resides in the cytoplasm. In terms of biological role, an essential GTPase which binds GTP, GDP and possibly (p)ppGpp with moderate affinity, with high nucleotide exchange rates and a fairly low GTP hydrolysis rate. Plays a role in control of the cell cycle, stress response, ribosome biogenesis and in those bacteria that undergo differentiation, in morphogenesis control. The sequence is that of GTPase Obg from Maricaulis maris (strain MCS10) (Caulobacter maris).